Reading from the N-terminus, the 456-residue chain is 26S proteasome non-ATPase regulatory subunit 12 (456 aa).

Residue alanine 2 is modified to N-acetylalanine. Residue lysine 92 forms a Glycyl lysine isopeptide (Lys-Gly) (interchain with G-Cter in SUMO1); alternate linkage. Lysine 92 is covalently cross-linked (Glycyl lysine isopeptide (Lys-Gly) (interchain with G-Cter in SUMO2); alternate). N6-acetyllysine occurs at positions 221 and 368. The region spanning 242–420 is the PCI domain; the sequence is SICKHYRAIY…GIINFQRPKD (179 aa).

Belongs to the proteasome subunit p55 family. In terms of assembly, component of the 19S proteasome regulatory particle complex. The 26S proteasome consists of a 20S core particle (CP) and two 19S regulatory subunits (RP). The regulatory particle is made of a lid composed of 9 subunits including PSMD12, a base containing 6 ATPases and few additional components. Interacts with ERCC6.

In terms of biological role, component of the 26S proteasome, a multiprotein complex involved in the ATP-dependent degradation of ubiquitinated proteins. This complex plays a key role in the maintenance of protein homeostasis by removing misfolded or damaged proteins, which could impair cellular functions, and by removing proteins whose functions are no longer required. Therefore, the proteasome participates in numerous cellular processes, including cell cycle progression, apoptosis, or DNA damage repair. This chain is 26S proteasome non-ATPase regulatory subunit 12 (PSMD12), found in Bos taurus (Bovine).